The sequence spans 339 residues: Lipopolysaccharide 1,2-glucosyltransferase (339 aa).

Residues 35–40 (GIDENY) and 132–133 (DA) contribute to the UDP site. Mg(2+) contacts are provided by Asp-132 and Asp-134. 2 short sequence motifs (DXD) span residues 132–134 (DAD) and 219–221 (DQD). Residue His-268 coordinates Mg(2+). 268–274 (HYTGITK) is a UDP binding site.

The protein belongs to the glycosyltransferase 8 family. Mg(2+) is required as a cofactor.

The protein resides in the cell inner membrane. It catalyses the reaction UDP-glucose + [lipopolysaccharide] = UDP + D-glucosyl-[lipopolysaccharide].. It participates in bacterial outer membrane biogenesis; LPS core biosynthesis. In terms of biological role, glucosyltransferase involved in the biosynthesis of the core oligosaccharide region of lipopolysaccharide (LPS). Catalyzes the addition of a glucose (glucose II) to the outer-core galactose I. Has a marked preference for its specific donor substrate, but it appears to have a relaxed specificity for alternate LPS acceptor residues, providing the overall size of the acceptor is conserved. This is Lipopolysaccharide 1,2-glucosyltransferase from Escherichia coli.